The following is a 98-amino-acid chain: Co-chaperonin GroES (98 aa).

This sequence belongs to the GroES chaperonin family. In terms of assembly, heptamer of 7 subunits arranged in a ring. Interacts with the chaperonin GroEL.

It localises to the cytoplasm. In terms of biological role, together with the chaperonin GroEL, plays an essential role in assisting protein folding. The GroEL-GroES system forms a nano-cage that allows encapsulation of the non-native substrate proteins and provides a physical environment optimized to promote and accelerate protein folding. GroES binds to the apical surface of the GroEL ring, thereby capping the opening of the GroEL channel. The polypeptide is Co-chaperonin GroES (Leifsonia xyli subsp. xyli (strain CTCB07)).